Reading from the N-terminus, the 189-residue chain is Phosphomevalonate kinase (189 aa).

ATP is bound by residues 10–16 (KRKCGKD) and arginine 138. Asparagine 168 contributes to the substrate binding site.

The protein localises to the cytoplasm. The protein resides in the cytosol. It carries out the reaction (R)-5-phosphomevalonate + ATP = (R)-5-diphosphomevalonate + ADP. Its pathway is isoprenoid biosynthesis; isopentenyl diphosphate biosynthesis via mevalonate pathway; isopentenyl diphosphate from (R)-mevalonate: step 2/3. This is Phosphomevalonate kinase from Drosophila melanogaster (Fruit fly).